A 239-amino-acid chain; its full sequence is Uridylate kinase (239 aa).

13-16 serves as a coordination point for ATP; that stretch reads KVSG. UMP is bound at residue G55. Residues G56 and R60 each coordinate ATP. UMP-binding positions include D75 and 136–143; that span reads TGNPFCTT. Residues T163, Q164, Y169, and D172 each coordinate ATP.

It belongs to the UMP kinase family. In terms of assembly, homohexamer.

It is found in the cytoplasm. It carries out the reaction UMP + ATP = UDP + ADP. The protein operates within pyrimidine metabolism; CTP biosynthesis via de novo pathway; UDP from UMP (UMPK route): step 1/1. Its activity is regulated as follows. Inhibited by UTP. In terms of biological role, catalyzes the reversible phosphorylation of UMP to UDP. The chain is Uridylate kinase from Rickettsia bellii (strain RML369-C).